Here is a 678-residue protein sequence, read N- to C-terminus: Platelet endothelial cell adhesion molecule (678 aa).

A signal peptide spans 1-17; it reads MLLALLLTMLLYASLQA. Residues 18-589 lie on the Extracellular side of the membrane; that stretch reads QENSFTINSI…VRVFLAPWKK (572 aa). Ig-like C2-type domains follow at residues 40–126, 135–213, 225–309, 315–391, 413–472, and 488–577; these read GQKL…PEVT, GGIV…FIRS, PKFQ…ILVN, PRPK…LVPV, GQII…NCHS, and PVDE…RSGP. Residues cysteine 47 and cysteine 99 are joined by a disulfide bond. N-linked (GlcNAc...) asparagine glycosylation is found at asparagine 74 and asparagine 141. 2 disulfides stabilise this stretch: cysteine 142-cysteine 195 and cysteine 245-cysteine 293. Residues asparagine 309, asparagine 345, asparagine 360, asparagine 424, and asparagine 540 are each glycosylated (N-linked (GlcNAc...) asparagine). 3 cysteine pairs are disulfide-bonded: cysteine 336/cysteine 375, cysteine 420/cysteine 465, and cysteine 512/cysteine 561. Residues 590-610 form a helical membrane-spanning segment; the sequence is GLIAVVVIGVVIAALIVAAKY. Residues 611–678 lie on the Cytoplasmic side of the membrane; it reads YFLRKAKAKQ…EPHQENGRLP (68 aa). The segment at 634 to 653 is disordered; that stretch reads NSNSEKVSEPSVETNSHYDS. The short motif at 658 to 663 is the ITIM motif element; sequence VEYTEV. Tyrosine 660 carries the post-translational modification Phosphotyrosine; by FER.

As to quaternary structure, trans-homodimer (via Ig-like C2-type 1 and Ig-like C2-type 2 domains); trans-homodimerization is required for cell-cell interaction. Forms a complex with BDKRB2 and GNAQ. Interacts with BDKRB2 and GNAQ. Interacts with PTPN11. Interacts with FER. Interacts with CD177; the interaction is Ca(2+)-dependent; the interaction is direct. Phosphorylated on Ser and Tyr residues after cellular activation. In endothelial cells Fyn mediates mechanical-force (stretch or pull) induced tyrosine phosphorylation. Phosphorylated on tyrosine residues by FER and FES in response to FCER1 activation. In terms of processing, palmitoylation by ZDHHC21 is necessary for cell surface expression in endothelial cells and enrichment in membrane rafts.

The protein resides in the cell membrane. It localises to the membrane raft. It is found in the cell junction. In terms of biological role, cell adhesion molecule which is required for leukocyte transendothelial migration (TEM) under most inflammatory conditions. Tyr-660 plays a critical role in TEM and is required for efficient trafficking of PECAM1 to and from the lateral border recycling compartment (LBRC) and is also essential for the LBRC membrane to be targeted around migrating leukocytes. Trans-homophilic interaction may play a role in endothelial cell-cell adhesion via cell junctions. Heterophilic interaction with CD177 plays a role in transendothelial migration of neutrophils. Homophilic ligation of PECAM1 prevents macrophage-mediated phagocytosis of neighboring viable leukocytes by transmitting a detachment signal. Promotes macrophage-mediated phagocytosis of apoptotic leukocytes by tethering them to the phagocytic cells; PECAM1-mediated detachment signal appears to be disabled in apoptotic leukocytes. Modulates bradykinin receptor BDKRB2 activation. Regulates bradykinin- and hyperosmotic shock-induced ERK1/2 activation in endothelial cells. Induces susceptibility to atherosclerosis. The polypeptide is Platelet endothelial cell adhesion molecule (Pecam1) (Rattus norvegicus (Rat)).